We begin with the raw amino-acid sequence, 416 residues long: Adenosylhomocysteinase (416 aa).

Thr55, Asp126, and Glu151 together coordinate substrate. Residue 152 to 154 (TTT) participates in NAD(+) binding. Positions 181 and 185 each coordinate substrate. Residues Asn186, 215–220 (GYGWVG), Glu238, Asn273, 294–296 (AGH), and Asn341 each bind NAD(+).

It belongs to the adenosylhomocysteinase family. Requires NAD(+) as cofactor.

The protein resides in the cytoplasm. It carries out the reaction S-adenosyl-L-homocysteine + H2O = L-homocysteine + adenosine. It participates in amino-acid biosynthesis; L-homocysteine biosynthesis; L-homocysteine from S-adenosyl-L-homocysteine: step 1/1. Its function is as follows. May play a key role in the regulation of the intracellular concentration of adenosylhomocysteine. The protein is Adenosylhomocysteinase of Aeropyrum pernix (strain ATCC 700893 / DSM 11879 / JCM 9820 / NBRC 100138 / K1).